Here is a 410-residue protein sequence, read N- to C-terminus: Phosphoglycerate kinase (410 aa).

Residues 19–21 (DLN), arginine 34, 57–60 (HQGK), arginine 114, and arginine 154 contribute to the substrate site. Residues glutamate 332 and 358–361 (GGHS) contribute to the ATP site.

This sequence belongs to the phosphoglycerate kinase family. Homodimer.

It localises to the cytoplasm. The catalysed reaction is (2R)-3-phosphoglycerate + ATP = (2R)-3-phospho-glyceroyl phosphate + ADP. It functions in the pathway carbohydrate degradation; glycolysis; pyruvate from D-glyceraldehyde 3-phosphate: step 2/5. This chain is Phosphoglycerate kinase (pgk), found in Pyrococcus abyssi (strain GE5 / Orsay).